The sequence spans 87 residues: Hemocyanin alpha chain (87 aa).

This sequence belongs to the tyrosinase family. Hemocyanin subfamily. In terms of assembly, polymer that contains six different types of chains (alpha, beta, gamma, delta, epsilon, and zeta). Hemolymph.

The protein resides in the secreted. It is found in the extracellular space. Functionally, hemocyanins are copper-containing oxygen carriers occurring freely dissolved in the hemolymph of many mollusks and arthropods. This Tachypleus tridentatus (Japanese horseshoe crab) protein is Hemocyanin alpha chain.